Reading from the N-terminus, the 930-residue chain is RNA-binding protein 10 (930 aa).

2 stretches are compositionally biased toward basic and acidic residues: residues 1 to 14 (MEYE…DRTG) and 21 to 45 (RSQD…RSYP). Positions 1-127 (MEYERRGGRG…EDEEEEEEKA (127 aa)) are disordered. Over residues 59–70 (DSSEEQSAEDSY) the composition is skewed to acidic residues. 2 positions are modified to phosphoserine: serine 61 and serine 89. The span at 80–89 (RRRRRRHRHS) shows a compositional bias: basic residues. The segment covering 98–111 (RDGDYRDQDYRTEQ) has biased composition (basic and acidic residues). The span at 112 to 125 (GEEEEEEDEEEEEE) shows a compositional bias: acidic residues. The 81-residue stretch at 129–209 (NIVMLRMLPQ…QKVSMHYSDP (81 aa)) folds into the RRM 1 domain. The segment at 212-242 (KINEDWLCNKCGVQNFKRREKCFKCGVPKSE) adopts a RanBP2-type zinc-finger fold. Residues 300 to 384 (DTIILRNLNP…KTINVEFAKG (85 aa)) form the RRM 2 domain. Lysine 383 is modified (N6-acetyllysine). Disordered regions lie at residues 464-487 (GPGM…EAGA), 503-522 (APGL…TATN), 537-566 (ELQS…QYPV), 620-646 (EQSA…HKTK), and 712-753 (DLPK…EEKL). A compositionally biased stretch (polar residues) spans 507-522 (YQQSAEGSSGQSTATN). The segment covering 540-562 (SPTQPSSSAFPPATSPTAPEAYS) has biased composition (low complexity). A compositionally biased stretch (basic and acidic residues) spans 623-639 (ADGHKDTGASSKEGKEK). Serine 718, serine 723, serine 733, serine 736, and serine 738 each carry phosphoserine. Residues 743–753 (ERGGPEREEKL) show a composition bias toward basic and acidic residues. The C2H2-type; atypical zinc-finger motif lies at 759–784 (LACLLCRRQFPSKEALIRHQQLSGLH). Serine 781, serine 797, and serine 845 each carry phosphoserine. Positions 818–861 (AAERREKYGIPEPPEPKRRKYGGISTASVDFEQPTRDGLGSDNI) are disordered. Residues 858 to 904 (SDNIGSRMLQAMGWKEGSGLGRKKQGIVTPIEAQTRVRGSGLGARGS) form the G-patch domain. Residue arginine 902 is modified to Omega-N-methylarginine.

Associates with the spliceosome. Component of a large chromatin remodeling complex, at least composed of MYSM1, PCAF, RBM10 and KIF11/TRIP5.

It is found in the nucleus. Binds to ssRNA containing the consensus sequence 5'-AGGUAA-3'. May be involved in post-transcriptional processing, most probably in mRNA splicing. Binds to RNA homopolymers, with a preference for poly(G) and poly(U) and little for poly(A). May bind to specific miRNA hairpins. The sequence is that of RNA-binding protein 10 from Mus musculus (Mouse).